The sequence spans 532 residues: Phosphoenolpyruvate carboxykinase (ATP) (532 aa).

Residues Arg60, Tyr195, and Lys201 each coordinate substrate. ATP contacts are provided by residues Lys201, His221, and 237-245; that span reads GLSGTGKTT. 2 residues coordinate Mn(2+): Lys201 and His221. Asp258 is a binding site for Mn(2+). Residues Glu287, Arg323, and Thr448 each contribute to the ATP site. Residue Arg323 participates in substrate binding.

It belongs to the phosphoenolpyruvate carboxykinase (ATP) family. The cofactor is Mn(2+).

The protein localises to the cytoplasm. It carries out the reaction oxaloacetate + ATP = phosphoenolpyruvate + ADP + CO2. The protein operates within carbohydrate biosynthesis; gluconeogenesis. In terms of biological role, involved in the gluconeogenesis. Catalyzes the conversion of oxaloacetate (OAA) to phosphoenolpyruvate (PEP) through direct phosphoryl transfer between the nucleoside triphosphate and OAA. The sequence is that of Phosphoenolpyruvate carboxykinase (ATP) from Christiangramia forsetii (strain DSM 17595 / CGMCC 1.15422 / KT0803) (Gramella forsetii).